Here is a 180-residue protein sequence, read N- to C-terminus: ATP-dependent protease subunit HslV (180 aa).

Residue threonine 5 is part of the active site. Na(+) is bound by residues glycine 161, cysteine 164, and threonine 167.

This sequence belongs to the peptidase T1B family. HslV subfamily. In terms of assembly, a double ring-shaped homohexamer of HslV is capped on each side by a ring-shaped HslU homohexamer. The assembly of the HslU/HslV complex is dependent on binding of ATP.

It is found in the cytoplasm. It carries out the reaction ATP-dependent cleavage of peptide bonds with broad specificity.. Its activity is regulated as follows. Allosterically activated by HslU binding. Functionally, protease subunit of a proteasome-like degradation complex believed to be a general protein degrading machinery. The polypeptide is ATP-dependent protease subunit HslV (Campylobacter jejuni subsp. doylei (strain ATCC BAA-1458 / RM4099 / 269.97)).